Here is a 523-residue protein sequence, read N- to C-terminus: Butyrophilin subfamily 2 member A2 (523 aa).

Positions 1–32 (MEPAAALHFSLPASLLLLLLLLLLSLCALVSA) are cleaved as a signal peptide. Residues 33–265 (QFTVVGPANP…AVILTASPWM (233 aa)) lie on the Extracellular side of the membrane. The region spanning 34-145 (FTVVGPANPI…SYDEAILRLV (112 aa)) is the Ig-like V-type domain. N-linked (GlcNAc...) asparagine glycosylation is found at Asn50, Asn118, Asn220, and Asn226. The cysteines at positions 55 and 129 are disulfide-linked. The 82-residue stretch at 153–234 (PLIEIKAQED…VNNTLLGQEK (82 aa)) folds into the Ig-like C2-type domain. Residues 266 to 286 (VSMTVILAVFIIFMAVSICCI) form a helical membrane-spanning segment. A coiled-coil region spans residues 286-321 (IKKLQREKKILSGEKKVEQEEKEIAQQLQEELRWRR). Over 287–523 (KKLQREKKIL…LHRVGTHQSL (237 aa)) the chain is Cytoplasmic. The region spanning 309–502 (IAQQLQEELR…IFICPALTGA (194 aa)) is the B30.2/SPRY domain.

It belongs to the immunoglobulin superfamily. BTN/MOG family. N-glycosylated. Highly expressed in brain, bone marrow, small intestine, muscle, spleen and pancreas. Moderate expression was seen in lung, liver and kidney.

It is found in the membrane. Functionally, inhibits the proliferation of CD4 and CD8 T-cells activated by anti-CD3 antibodies, T-cell metabolism and IL2 and IFNG secretion. The chain is Butyrophilin subfamily 2 member A2 (BTN2A2) from Homo sapiens (Human).